We begin with the raw amino-acid sequence, 429 residues long: Ribosomal RNA small subunit methyltransferase B (429 aa).

S-adenosyl-L-methionine is bound by residues 254-260, Asp277, Asp303, and Asp322; that span reads CAAPGGK. Cys375 serves as the catalytic Nucleophile.

This sequence belongs to the class I-like SAM-binding methyltransferase superfamily. RsmB/NOP family.

Its subcellular location is the cytoplasm. It catalyses the reaction cytidine(967) in 16S rRNA + S-adenosyl-L-methionine = 5-methylcytidine(967) in 16S rRNA + S-adenosyl-L-homocysteine + H(+). In terms of biological role, specifically methylates the cytosine at position 967 (m5C967) of 16S rRNA. This chain is Ribosomal RNA small subunit methyltransferase B, found in Shigella flexneri.